Consider the following 177-residue polypeptide: Large ribosomal subunit protein uL6 (177 aa).

The protein belongs to the universal ribosomal protein uL6 family. Part of the 50S ribosomal subunit.

Functionally, this protein binds to the 23S rRNA, and is important in its secondary structure. It is located near the subunit interface in the base of the L7/L12 stalk, and near the tRNA binding site of the peptidyltransferase center. This chain is Large ribosomal subunit protein uL6, found in Rubrobacter xylanophilus (strain DSM 9941 / JCM 11954 / NBRC 16129 / PRD-1).